A 433-amino-acid chain; its full sequence is Glycerol-3-phosphate dehydrogenase [NAD(+)] (433 aa).

NAD(+) contacts are provided by residues 17 to 22, Phe49, and Phe117; that span reads GSGNWG. Lys140 contacts substrate. Ala173 is an NAD(+) binding site. The tract at residues 187 to 246 is disordered; that stretch reads IAYDPPPIDSSRAATPRDRSPNYDSTSANKLPDLTVTSADSNGKDDRGRRTKAKLTPVPE. Positions 208–227 are enriched in polar residues; the sequence is NYDSTSANKLPDLTVTSADS. Lys283 acts as the Proton acceptor in catalysis. NAD(+)-binding residues include Arg349 and Gln378. 349-350 is a substrate binding site; that stretch reads RN.

It belongs to the NAD-dependent glycerol-3-phosphate dehydrogenase family.

It carries out the reaction sn-glycerol 3-phosphate + NAD(+) = dihydroxyacetone phosphate + NADH + H(+). This chain is Glycerol-3-phosphate dehydrogenase [NAD(+)], found in Pyricularia oryzae (strain Y34) (Rice blast fungus).